The chain runs to 579 residues: Potassium-transporting ATPase potassium-binding subunit (579 aa).

10 helical membrane-spanning segments follow: residues 1-21, 64-84, 135-155, 178-198, 265-285, 293-313, 398-418, 435-455, 503-523, and 549-569; these read MISN…ACVV, HYAL…YGLQ, GLTV…IGLI, IYIL…QGVV, FLEL…FGLM, WAIL…AVSA, GLYG…LMVG, MAAL…AIAV, WLGI…LAIA, and LLIG…LALG.

Belongs to the KdpA family. The system is composed of three essential subunits: KdpA, KdpB and KdpC.

It localises to the cell membrane. Functionally, part of the high-affinity ATP-driven potassium transport (or Kdp) system, which catalyzes the hydrolysis of ATP coupled with the electrogenic transport of potassium into the cytoplasm. This subunit binds the extracellular potassium ions and delivers the ions to the membrane domain of KdpB through an intramembrane tunnel. This Herpetosiphon aurantiacus (strain ATCC 23779 / DSM 785 / 114-95) protein is Potassium-transporting ATPase potassium-binding subunit.